Reading from the N-terminus, the 262-residue chain is Thiamine thiazole synthase (262 aa).

Residues Ala-36, 55 to 56 (EK), Gly-63, Val-127, and 154 to 156 (HVD) contribute to the NAD(+) site. Residues Asp-156 and His-171 each contribute to the Fe cation site. Met-224 provides a ligand contact to NAD(+). Arg-234 serves as a coordination point for glycine.

Belongs to the THI4 family. In terms of assembly, homooctamer; tetramer of dimers. Fe(2+) is required as a cofactor.

It carries out the reaction hydrogen sulfide + glycine + NAD(+) = ADP-5-ethyl-4-methylthiazole-2-carboxylate + nicotinamide + 3 H2O + H(+). It participates in cofactor biosynthesis; thiamine diphosphate biosynthesis. Involved in the biosynthesis of the thiazole moiety of thiamine. Catalyzes the conversion of NAD and glycine to adenosine diphosphate 5-(2-hydroxyethyl)-4-methylthiazole-2-carboxylate (ADT), an adenylated thiazole intermediate, using free sulfide as a source of sulfur. This is Thiamine thiazole synthase from Methanothrix thermoacetophila (strain DSM 6194 / JCM 14653 / NBRC 101360 / PT) (Methanosaeta thermophila).